Reading from the N-terminus, the 344-residue chain is tRNA N6-adenosine threonylcarbamoyltransferase (344 aa).

Fe cation contacts are provided by His-110 and His-114. Substrate-binding positions include 133 to 137 (AVSGA), Asp-166, Gly-179, and Asn-278. Fe cation is bound at residue Asp-303.

It belongs to the KAE1 / TsaD family. Requires Fe(2+) as cofactor.

It is found in the cytoplasm. The enzyme catalyses L-threonylcarbamoyladenylate + adenosine(37) in tRNA = N(6)-L-threonylcarbamoyladenosine(37) in tRNA + AMP + H(+). In terms of biological role, required for the formation of a threonylcarbamoyl group on adenosine at position 37 (t(6)A37) in tRNAs that read codons beginning with adenine. Is involved in the transfer of the threonylcarbamoyl moiety of threonylcarbamoyl-AMP (TC-AMP) to the N6 group of A37, together with TsaE and TsaB. TsaD likely plays a direct catalytic role in this reaction. The sequence is that of tRNA N6-adenosine threonylcarbamoyltransferase from Chlamydia caviae (strain ATCC VR-813 / DSM 19441 / 03DC25 / GPIC) (Chlamydophila caviae).